The primary structure comprises 166 residues: Putative membrane protein 162 (166 aa).

Met1 is a topological domain (intravirion). The chain crosses the membrane as a helical span at residues 2–22 (YYPAVQVLIGIILVDNFNTEF). At 23 to 166 (LSSEKKNCKT…TIMGIARNIL (144 aa)) the chain is on the virion surface side.

It belongs to the asfivirus envelope protein p22 family.

It is found in the virion membrane. The protein resides in the host cell membrane. This is Putative membrane protein 162 from African swine fever virus (isolate Tick/Malawi/Lil 20-1/1983) (ASFV).